The sequence spans 201 residues: 3-isopropylmalate dehydratase small subunit (201 aa).

The protein belongs to the LeuD family. LeuD type 1 subfamily. As to quaternary structure, heterodimer of LeuC and LeuD.

It catalyses the reaction (2R,3S)-3-isopropylmalate = (2S)-2-isopropylmalate. It functions in the pathway amino-acid biosynthesis; L-leucine biosynthesis; L-leucine from 3-methyl-2-oxobutanoate: step 2/4. Functionally, catalyzes the isomerization between 2-isopropylmalate and 3-isopropylmalate, via the formation of 2-isopropylmaleate. This is 3-isopropylmalate dehydratase small subunit from Glaesserella parasuis serovar 5 (strain SH0165) (Haemophilus parasuis).